A 124-amino-acid chain; its full sequence is Salivary protein 15 Iric-3 (124 aa).

The first 22 residues, 1–22 (MESFVAMKVVCIILLFVIAAEA), serve as a signal peptide directing secretion. Residues Asn82 and Asn93 are each glycosylated (N-linked (GlcNAc...) asparagine). Residues 105-124 (GPNNQTCHKKDECVGYIPGC) are CD4-binding.

The protein belongs to the salp15 family. Interacts with host CD4. Interacts with host DC-SIGN (CD209). Interacts with Borrelia outer surface protein C (OspC). In terms of tissue distribution, expressed in salivary glands. Detected in fed adult female.

The protein resides in the secreted. Functionally, salivary tick protein that downregulates host immune system by binding to both dendritic cells, and CD4(+) T cells. Specifically binds to the CD4 coreceptor on T cells. This interaction prevents the activation of the Src kinase, Lck, and its downstream substrate Zap-70, and results in deficient activation of PLCgamma1, the repression of calcium fluxes triggered by T-cell antigen receptor (TCR) ligation, and a subsequent reduction in interleukin-2 production. This salivary protein also binds to DC-SIGN (CD209) on dendritic cells (DC) and activates the Raf-1 kinase/MEK signaling pathway that results in down-regulating expression of pro-inflammatory cytokines. Furthermore, it inhibits T cell proliferation induced by DCs. In addition, it inhibits in vitro keratinocyte inflammation induced by Borrelia burgdorferi or by the major outer surface protein (OspC) of Borrelia. In addition, it downregulates chemokines and monocyte chemoattractant protein 1, as well as several antimicrobial peptides such as defensins, cathelicidin, psoriasin, and RNase 7. Apart from its immunomodulatory activities, it is also associated with protection of Borrelia spirochetes from antibody-mediated killing through its binding to OspC. In vivo, tests on different immune disease animal models show promising therapeutic results, e.g., in inhibiting HIV infection, experimental autoimmune encephalomyelitis, transplantation rejection, and asthma. The chain is Salivary protein 15 Iric-3 from Ixodes ricinus (Common tick).